Reading from the N-terminus, the 585-residue chain is MAGUK p55 subfamily member 3 (585 aa).

2 L27 domains span residues 6–60 (EDSG…ERQS) and 61–118 (PTPV…FDPV). Positions 137–218 (IVRLVKNKEP…SITLKIIPAT (82 aa)) constitute a PDZ domain. Residues 226–296 (ESKVFMRALF…PSKQFQERRL (71 aa)) form the SH3 domain. Ser-307 bears the Phosphoserine mark. In terms of domain architecture, Guanylate kinase-like spans 385–570 (SRLVVLIGSL…VCSQLRAVIE (186 aa)). The tract at residues 510–530 (KRKTPPVSPDSEDPATPLDEQ) is disordered.

Belongs to the MAGUK family. Interacts with HTR2C; this interaction stabilizes the receptor at the plasma membrane and prevents the desensitization of the HTR2C receptor-mediated calcium response. Interacts with HTR2A. Interacts with HTR4. Interacts (via PDZ domain) with CADM1 (via C-terminus)Interacts (via PDZ domain) with CADM1; this interaction connects CADM1 with DLG1. Interacts (via Guanylate kinase-like domain) with PALS1. Interacts with DLG1 (via N-terminus); this interaction connects CADM1 with DLG1 and links CADM1 with the regulatory subunit of phosphoinositide-3-kinase (PI3K) by forming a multiprotein complex and participates in cell spreading.

The protein localises to the apical cell membrane. The protein resides in the cell membrane. Its subcellular location is the cell junction. It localises to the adherens junction. Its function is as follows. Participates in cell spreading through the phosphoinositide-3-kinase (PI3K) pathway by connecting CADM1 to DLG1 and the regulatory subunit of phosphoinositide-3-kinase (PI3K). Stabilizes HTR2C at the plasma membrane and prevents its desensitization. May participates in the maintenance of adherens junctions. In Rattus norvegicus (Rat), this protein is MAGUK p55 subfamily member 3.